The chain runs to 215 residues: Small ribosomal subunit protein uS5 (215 aa).

The segment covering 1–12 (MSGTQRRGGGAG) has biased composition (gly residues). The interval 1 to 31 (MSGTQRRGGGAGGERRGRDNRRGQNDRNRNQ) is disordered. Residues 13–31 (GERRGRDNRRGQNDRNRNQ) show a composition bias toward basic and acidic residues. One can recognise an S5 DRBM domain in the interval 34–97 (YLERVVAINR…EEAKKHFFKV (64 aa)).

This sequence belongs to the universal ribosomal protein uS5 family. Part of the 30S ribosomal subunit. Contacts proteins S4 and S8.

In terms of biological role, with S4 and S12 plays an important role in translational accuracy. Located at the back of the 30S subunit body where it stabilizes the conformation of the head with respect to the body. The chain is Small ribosomal subunit protein uS5 from Cutibacterium acnes (strain DSM 16379 / KPA171202) (Propionibacterium acnes).